A 582-amino-acid polypeptide reads, in one-letter code: Acylamino-acid-releasing enzyme (582 aa).

Residues S445, D524, and H556 each act as charge relay system in the active site.

Belongs to the peptidase S9C family.

The protein localises to the cytoplasm. It carries out the reaction Cleavage of an N-acetyl or N-formyl amino acid from the N-terminus of a polypeptide.. Its function is as follows. This enzyme catalyzes the hydrolysis of the N-terminal peptide bond of an N-acetylated peptide to generate an N-acetylated amino acid and a peptide with a free N-terminus. This is Acylamino-acid-releasing enzyme from Aeropyrum pernix (strain ATCC 700893 / DSM 11879 / JCM 9820 / NBRC 100138 / K1).